We begin with the raw amino-acid sequence, 418 residues long: Hepatic and glial cell adhesion molecule (418 aa).

The signal sequence occupies residues 1–33; sequence MKREREAPSRAFSALRLAPFVYLLLIQTEPLEG. An Ig-like V-type domain is found at 34-141; the sequence is VNITSPVRLI…TGEKTINLTV (108 aa). At 34 to 240 the chain is on the extracellular side; sequence VNITSPVRLI…VKITVYRRSS (207 aa). 4 N-linked (GlcNAc...) asparagine glycosylation sites follow: Asn35, Asn138, Asn167, and Asn189. Residues 148–234 form the Ig-like C2-type domain; it reads PQVLVASTTV…QGRSPPVKIT (87 aa). Cys168 and Cys217 form a disulfide bridge. The chain crosses the membrane as a helical span at residues 241 to 261; the sequence is LYIILSTGGIFLLVTLVTVCA. Residues 262-418 lie on the Cytoplasmic side of the membrane; that stretch reads CWKPSKKSGK…DEAGPVEISA (157 aa). The segment at 271-418 is disordered; the sequence is KKRKLEKQNS…DEAGPVEISA (148 aa). The residue at position 280 (Ser280) is a Phosphoserine. A compositionally biased stretch (basic and acidic residues) spans 287-308; sequence SDDRLKPEADTLPRSGEQERKN. Ser352 and Ser379 each carry phosphoserine. Residues 385–400 show a composition bias toward low complexity; sequence GSPGRSRSASRTLRTA.

In terms of assembly, homodimer. Dimer formation occurs predominantly through cis interactions on the cell surface. Part of a complex containing MLC1, TRPV4, AQP4 and ATP1B1. Interacts with CLCN2. In terms of processing, N-glycosylated.

The protein localises to the cytoplasm. It localises to the cell membrane. Involved in regulating cell motility and cell-matrix interactions. May inhibit cell growth through suppression of cell proliferation. In glia, associates and targets CLCN2 at astrocytic processes and myelinated fiber tracts where it may regulate transcellular chloride flux involved in neuron excitability. The protein is Hepatic and glial cell adhesion molecule of Bos taurus (Bovine).